Consider the following 514-residue polypeptide: Probable type III restriction-modification enzyme HindVIP Res subunit (514 aa).

It belongs to the type III restriction-modification system Res protein family. As to quaternary structure, contains two different subunits: Res and Mod. It depends on Mg(2+) as a cofactor. S-adenosyl-L-methionine serves as cofactor.

The catalysed reaction is Endonucleolytic cleavage of DNA to give specific double-stranded fragments with terminal 5'-phosphates.. A type III restriction enzyme that recognizes 2 inversely oriented double-stranded sequences 5'-CGAAT-3' and cleaves 25-27 base pairs downstream. After binding to one recognition site undergoes random one-dimensional diffusion along DNA until it collides with a stationary enzyme bound to the second DNA site, which is when DNA cleavage occurs. DNA restriction requires both the Res and Mod subunits. This is Probable type III restriction-modification enzyme HindVIP Res subunit from Haemophilus influenzae (strain ATCC 51907 / DSM 11121 / KW20 / Rd).